A 141-amino-acid chain; its full sequence is Nucleoside diphosphate kinase (141 aa).

Lysine 11, phenylalanine 59, arginine 87, threonine 93, arginine 104, and asparagine 114 together coordinate ATP. The active-site Pros-phosphohistidine intermediate is the histidine 117.

The protein belongs to the NDK family. As to quaternary structure, homotetramer. The cofactor is Mg(2+).

The protein localises to the cytoplasm. It catalyses the reaction a 2'-deoxyribonucleoside 5'-diphosphate + ATP = a 2'-deoxyribonucleoside 5'-triphosphate + ADP. The catalysed reaction is a ribonucleoside 5'-diphosphate + ATP = a ribonucleoside 5'-triphosphate + ADP. Its function is as follows. Major role in the synthesis of nucleoside triphosphates other than ATP. The ATP gamma phosphate is transferred to the NDP beta phosphate via a ping-pong mechanism, using a phosphorylated active-site intermediate. This is Nucleoside diphosphate kinase from Leptothrix cholodnii (strain ATCC 51168 / LMG 8142 / SP-6) (Leptothrix discophora (strain SP-6)).